A 618-amino-acid polypeptide reads, in one-letter code: Proline--tRNA ligase (618 aa).

The protein belongs to the class-II aminoacyl-tRNA synthetase family. ProS type 1 subfamily. As to quaternary structure, homodimer.

The protein localises to the cytoplasm. It carries out the reaction tRNA(Pro) + L-proline + ATP = L-prolyl-tRNA(Pro) + AMP + diphosphate. Functionally, catalyzes the attachment of proline to tRNA(Pro) in a two-step reaction: proline is first activated by ATP to form Pro-AMP and then transferred to the acceptor end of tRNA(Pro). As ProRS can inadvertently accommodate and process non-cognate amino acids such as alanine and cysteine, to avoid such errors it has two additional distinct editing activities against alanine. One activity is designated as 'pretransfer' editing and involves the tRNA(Pro)-independent hydrolysis of activated Ala-AMP. The other activity is designated 'posttransfer' editing and involves deacylation of mischarged Ala-tRNA(Pro). The misacylated Cys-tRNA(Pro) is not edited by ProRS. In Streptococcus equi subsp. equi (strain 4047), this protein is Proline--tRNA ligase.